We begin with the raw amino-acid sequence, 179 residues long: ATP synthase subunit delta (179 aa).

Belongs to the ATPase delta chain family. As to quaternary structure, F-type ATPases have 2 components, F(1) - the catalytic core - and F(0) - the membrane proton channel. F(1) has five subunits: alpha(3), beta(3), gamma(1), delta(1), epsilon(1). F(0) has three main subunits: a(1), b(2) and c(10-14). The alpha and beta chains form an alternating ring which encloses part of the gamma chain. F(1) is attached to F(0) by a central stalk formed by the gamma and epsilon chains, while a peripheral stalk is formed by the delta and b chains.

It is found in the cell inner membrane. Its function is as follows. F(1)F(0) ATP synthase produces ATP from ADP in the presence of a proton or sodium gradient. F-type ATPases consist of two structural domains, F(1) containing the extramembraneous catalytic core and F(0) containing the membrane proton channel, linked together by a central stalk and a peripheral stalk. During catalysis, ATP synthesis in the catalytic domain of F(1) is coupled via a rotary mechanism of the central stalk subunits to proton translocation. Functionally, this protein is part of the stalk that links CF(0) to CF(1). It either transmits conformational changes from CF(0) to CF(1) or is implicated in proton conduction. In Burkholderia thailandensis (strain ATCC 700388 / DSM 13276 / CCUG 48851 / CIP 106301 / E264), this protein is ATP synthase subunit delta.